A 287-amino-acid chain; its full sequence is MEMO1 family protein MJ0403 (287 aa).

This sequence belongs to the MEMO1 family.

In Methanocaldococcus jannaschii (strain ATCC 43067 / DSM 2661 / JAL-1 / JCM 10045 / NBRC 100440) (Methanococcus jannaschii), this protein is MEMO1 family protein MJ0403.